A 459-amino-acid chain; its full sequence is NADH-ubiquinone oxidoreductase chain 4 (459 aa).

Transmembrane regions (helical) follow at residues 20-42 (PKWL…LTLF), 61-81 (MIST…IIAS), 103-123 (LQAL…YIMF), 148-168 (IYFL…LLYL), 194-214 (FLWV…GVHL), 224-244 (PVAG…YGMI), 257-277 (LAYP…SICM), 284-303 (SLIA…GILI), 307-329 (WGFT…LFCL), 350-370 (IILP…MALP), 392-414 (TILL…YMSS), and 435-455 (LLLT…ELIW).

It belongs to the complex I subunit 4 family.

It localises to the mitochondrion membrane. The catalysed reaction is a ubiquinone + NADH + 5 H(+)(in) = a ubiquinol + NAD(+) + 4 H(+)(out). In terms of biological role, core subunit of the mitochondrial membrane respiratory chain NADH dehydrogenase (Complex I) that is believed to belong to the minimal assembly required for catalysis. Complex I functions in the transfer of electrons from NADH to the respiratory chain. The immediate electron acceptor for the enzyme is believed to be ubiquinone. The sequence is that of NADH-ubiquinone oxidoreductase chain 4 (MT-ND4) from Polypterus ornatipinnis (Ornate bichir).